Reading from the N-terminus, the 130-residue chain is Holo-[acyl-carrier-protein] synthase (130 aa).

Mg(2+) is bound by residues aspartate 8 and glutamate 62.

It belongs to the P-Pant transferase superfamily. AcpS family. Mg(2+) serves as cofactor.

It is found in the cytoplasm. The enzyme catalyses apo-[ACP] + CoA = holo-[ACP] + adenosine 3',5'-bisphosphate + H(+). In terms of biological role, transfers the 4'-phosphopantetheine moiety from coenzyme A to a Ser of acyl-carrier-protein. This Polynucleobacter asymbioticus (strain DSM 18221 / CIP 109841 / QLW-P1DMWA-1) (Polynucleobacter necessarius subsp. asymbioticus) protein is Holo-[acyl-carrier-protein] synthase.